Consider the following 151-residue polypeptide: Transcription factor ATOH7 (151 aa).

A bHLH domain is found at 39 to 91 (KRRLAANARERRRMQGLNTAFDRLRKVVPQWGQDKKLSKYETLQMALSYIMAL).

The protein resides in the nucleus. It localises to the perikaryon. The protein localises to the cell projection. It is found in the axon. In terms of biological role, transcription factor that binds to DNA at the consensus sequence 5'-CAG[GC]TG-3'. Positively regulates the determination of retinal ganglion cell fate and formation of the optic nerve and retino-hypothalamic tract. Required for retinal circadian rhythm photoentrainment. Plays a role in brainstem auditory signaling and binaural processing. During retinal neurogenesis, activates its own transcription, as well as the transcription of CHRNB3 and BRN3. In Gallus gallus (Chicken), this protein is Transcription factor ATOH7.